A 611-amino-acid polypeptide reads, in one-letter code: Urease subunit alpha 2 (611 aa).

Residues 154–611 enclose the Urease domain; that stretch reads GGIDSHIHFI…LPMAQRYFLF (458 aa). Residues histidine 159, histidine 161, and lysine 242 each coordinate Ni(2+). Lysine 242 bears the N6-carboxylysine mark. Substrate is bound at residue histidine 244. Ni(2+) is bound by residues histidine 271 and histidine 297. The Proton donor role is filled by histidine 345. Position 385 (aspartate 385) interacts with Ni(2+). The tract at residues 411 to 434 is disordered; it reads GHLAPDQSAKTEQSLDNIMLSPTD. Polar residues predominate over residues 418-434; sequence SAKTEQSLDNIMLSPTD.

The protein belongs to the metallo-dependent hydrolases superfamily. Urease alpha subunit family. As to quaternary structure, heterotrimer of UreA (gamma), UreB (beta) and UreC (alpha) subunits. Three heterotrimers associate to form the active enzyme. Ni cation serves as cofactor. In terms of processing, carboxylation allows a single lysine to coordinate two nickel ions.

The protein resides in the cytoplasm. The catalysed reaction is urea + 2 H2O + H(+) = hydrogencarbonate + 2 NH4(+). It participates in nitrogen metabolism; urea degradation; CO(2) and NH(3) from urea (urease route): step 1/1. This Psychrobacter cryohalolentis (strain ATCC BAA-1226 / DSM 17306 / VKM B-2378 / K5) protein is Urease subunit alpha 2.